The sequence spans 441 residues: Ribosomal protein uS12 methylthiotransferase RimO (441 aa).

An MTTase N-terminal domain is found at 8–118; the sequence is PKIGFVSLGC…VLEHVHHYVP (111 aa). [4Fe-4S] cluster-binding residues include Cys17, Cys53, Cys82, Cys150, Cys154, and Cys157. The Radical SAM core domain occupies 136 to 373; sequence LTPRHYAYLK…MQLQQQISAE (238 aa). Residues 376–441 enclose the TRAM domain; sequence QEKVGREILV…DEYDLWGSRV (66 aa).

It belongs to the methylthiotransferase family. RimO subfamily. [4Fe-4S] cluster serves as cofactor.

It is found in the cytoplasm. The enzyme catalyses L-aspartate(89)-[ribosomal protein uS12]-hydrogen + (sulfur carrier)-SH + AH2 + 2 S-adenosyl-L-methionine = 3-methylsulfanyl-L-aspartate(89)-[ribosomal protein uS12]-hydrogen + (sulfur carrier)-H + 5'-deoxyadenosine + L-methionine + A + S-adenosyl-L-homocysteine + 2 H(+). Its function is as follows. Catalyzes the methylthiolation of an aspartic acid residue of ribosomal protein uS12. This is Ribosomal protein uS12 methylthiotransferase RimO from Shigella boydii serotype 18 (strain CDC 3083-94 / BS512).